We begin with the raw amino-acid sequence, 730 residues long: uncharacterized protein (730 aa).

2 positions are modified to phosphoserine: Ser-82 and Ser-89. 2 disordered regions span residues 82 to 114 (SPVR…TGSY) and 447 to 468 (NTNH…SKNE). Polar residues predominate over residues 89–98 (SIQPSNSGKN). Residues 449-460 (NHNFTTNNNNEN) show a composition bias toward low complexity. 2 positions are modified to phosphoserine: Ser-483 and Ser-651.

This is an uncharacterized protein from Saccharomyces cerevisiae (strain ATCC 204508 / S288c) (Baker's yeast).